Consider the following 414-residue polypeptide: Ribulose bisphosphate carboxylase large chain (414 aa).

Substrate is bound by residues Asn102 and Thr152. Lys154 serves as the catalytic Proton acceptor. Position 156 (Lys156) interacts with substrate. Residues Lys180, Asp182, and Glu183 each contribute to the Mg(2+) site. Lys180 is subject to N6-carboxylysine. His273 serves as the catalytic Proton acceptor. Substrate is bound by residues Arg274, His306, and Ser358.

The protein belongs to the RuBisCO large chain family. Type I subfamily. Heterohexadecamer of 8 large chains and 8 small chains; disulfide-linked. The disulfide link is formed within the large subunit homodimers. The cofactor is Mg(2+). In terms of processing, the disulfide bond which can form in the large chain dimeric partners within the hexadecamer appears to be associated with oxidative stress and protein turnover.

It localises to the plastid. The protein resides in the chloroplast. The enzyme catalyses 2 (2R)-3-phosphoglycerate + 2 H(+) = D-ribulose 1,5-bisphosphate + CO2 + H2O. It catalyses the reaction D-ribulose 1,5-bisphosphate + O2 = 2-phosphoglycolate + (2R)-3-phosphoglycerate + 2 H(+). Its function is as follows. RuBisCO catalyzes two reactions: the carboxylation of D-ribulose 1,5-bisphosphate, the primary event in carbon dioxide fixation, as well as the oxidative fragmentation of the pentose substrate in the photorespiration process. Both reactions occur simultaneously and in competition at the same active site. This Antrophyum reticulatum (Ox-tongue fern) protein is Ribulose bisphosphate carboxylase large chain (rbcL).